We begin with the raw amino-acid sequence, 147 residues long: Hemoglobin subunit beta (147 aa).

A Globin domain is found at 3-147; the sequence is NWTKTEKATI…VMSALGKQYH (145 aa). Residues H64 and H93 each coordinate heme b.

This sequence belongs to the globin family. As to quaternary structure, heterotetramer of two alpha chains and two beta chains. As to expression, red blood cells.

Functionally, involved in oxygen transport from gills to the various peripheral tissues. This Gymnodraco acuticeps (Antarctic dragonfish) protein is Hemoglobin subunit beta (hbb).